The sequence spans 97 residues: DNA-binding protein NEQ150 (97 aa).

Belongs to the PDCD5 family.

The polypeptide is DNA-binding protein NEQ150 (Nanoarchaeum equitans (strain Kin4-M)).